Consider the following 363-residue polypeptide: UDP-N-acetylglucosamine--N-acetylmuramyl-(pentapeptide) pyrophosphoryl-undecaprenol N-acetylglucosamine transferase (363 aa).

UDP-N-acetyl-alpha-D-glucosamine is bound by residues 12 to 14 (TAG), arginine 166, serine 196, and glutamine 291.

The protein belongs to the glycosyltransferase 28 family. MurG subfamily.

The protein localises to the cell inner membrane. The enzyme catalyses di-trans,octa-cis-undecaprenyl diphospho-N-acetyl-alpha-D-muramoyl-L-alanyl-D-glutamyl-meso-2,6-diaminopimeloyl-D-alanyl-D-alanine + UDP-N-acetyl-alpha-D-glucosamine = di-trans,octa-cis-undecaprenyl diphospho-[N-acetyl-alpha-D-glucosaminyl-(1-&gt;4)]-N-acetyl-alpha-D-muramoyl-L-alanyl-D-glutamyl-meso-2,6-diaminopimeloyl-D-alanyl-D-alanine + UDP + H(+). It functions in the pathway cell wall biogenesis; peptidoglycan biosynthesis. Its function is as follows. Cell wall formation. Catalyzes the transfer of a GlcNAc subunit on undecaprenyl-pyrophosphoryl-MurNAc-pentapeptide (lipid intermediate I) to form undecaprenyl-pyrophosphoryl-MurNAc-(pentapeptide)GlcNAc (lipid intermediate II). The chain is UDP-N-acetylglucosamine--N-acetylmuramyl-(pentapeptide) pyrophosphoryl-undecaprenol N-acetylglucosamine transferase from Legionella pneumophila (strain Lens).